The chain runs to 87 residues: Putative RNase MJ1548 (87 aa).

Residues arginine 65 and histidine 70 contribute to the active site. An RX(4)HXY motif motif is present at residues 65-72 (RNAIVHKY). Tyrosine 72 bears the O-di-AMP-tyrosine mark.

This sequence belongs to the HepT RNase toxin family. Homodimer, probably forms a complex with cognate antitoxin MJ1547. In terms of processing, modified by cognate antitoxin MJ1547; probably at least 2 successive AMPylation events occur on Tyr-72.

Its function is as follows. Probable toxic component of a putative type VII toxin-antitoxin (TA) system, probably an RNase. Probably neutralized by cognate antitoxin MJ1547. Neutralization may be due to AMPylation by antitoxin MJ1547. The sequence is that of Putative RNase MJ1548 from Methanocaldococcus jannaschii (strain ATCC 43067 / DSM 2661 / JAL-1 / JCM 10045 / NBRC 100440) (Methanococcus jannaschii).